The sequence spans 93 residues: Bombyxin-related peptide B (93 aa).

The N-terminal stretch at 1–21 (MKFVLVLVSLALLVSLASVQG) is a signal peptide. Intrachain disulfides connect C25–C80, C37–C93, and C79–C84. Positions 47-71 (SGAMGAAAMYGTRGWRWAAMGGNRG) are cleaved as a propeptide — c peptide like.

The protein belongs to the insulin family. Heterodimer of a B chain and an A chain linked by two disulfide bonds. As to expression, located in 4 pairs of medial neurosecretory cells in the brain.

It localises to the secreted. In Agrius convolvuli (Convolvulus hawk-moth), this protein is Bombyxin-related peptide B.